A 384-amino-acid chain; its full sequence is 8-amino-7-oxononanoate synthase (384 aa).

Arginine 21 contributes to the substrate binding site. 108-109 (GF) is a binding site for pyridoxal 5'-phosphate. Residue histidine 133 coordinates substrate. Positions 179, 207, and 233 each coordinate pyridoxal 5'-phosphate. Position 236 is an N6-(pyridoxal phosphate)lysine (lysine 236). Threonine 352 is a substrate binding site.

The protein belongs to the class-II pyridoxal-phosphate-dependent aminotransferase family. BioF subfamily. As to quaternary structure, homodimer. Pyridoxal 5'-phosphate is required as a cofactor.

It carries out the reaction 6-carboxyhexanoyl-[ACP] + L-alanine + H(+) = (8S)-8-amino-7-oxononanoate + holo-[ACP] + CO2. It functions in the pathway cofactor biosynthesis; biotin biosynthesis. In terms of biological role, catalyzes the decarboxylative condensation of pimeloyl-[acyl-carrier protein] and L-alanine to produce 8-amino-7-oxononanoate (AON), [acyl-carrier protein], and carbon dioxide. This Shigella sonnei (strain Ss046) protein is 8-amino-7-oxononanoate synthase.